A 162-amino-acid polypeptide reads, in one-letter code: Protein FAM162B (162 aa).

The segment at 26 to 69 (EATRRPAPALPPRGLPCYSSGGAPSNSGPQGHGEIHRVPTQRRP) is disordered. Residues 107 to 127 (VKACYIMIGLTIIACFAVIVS) form a helical membrane-spanning segment.

It belongs to the UPF0389 family.

The protein resides in the membrane. This chain is Protein FAM162B (FAM162B), found in Homo sapiens (Human).